The primary structure comprises 443 residues: ATP-dependent protease ATPase subunit HslU (443 aa).

ATP-binding positions include Ile18 and 60–65 (GVGKTE). A disordered region spans residues 139–161 (ARDSGFDANPSEENNATRQKFRK). Positions 256, 321, and 393 each coordinate ATP.

Belongs to the ClpX chaperone family. HslU subfamily. As to quaternary structure, a double ring-shaped homohexamer of HslV is capped on each side by a ring-shaped HslU homohexamer. The assembly of the HslU/HslV complex is dependent on binding of ATP.

It is found in the cytoplasm. Functionally, ATPase subunit of a proteasome-like degradation complex; this subunit has chaperone activity. The binding of ATP and its subsequent hydrolysis by HslU are essential for unfolding of protein substrates subsequently hydrolyzed by HslV. HslU recognizes the N-terminal part of its protein substrates and unfolds these before they are guided to HslV for hydrolysis. This is ATP-dependent protease ATPase subunit HslU from Nitrosomonas eutropha (strain DSM 101675 / C91 / Nm57).